The sequence spans 227 residues: Cytochrome c oxidase subunit 2 (227 aa).

The Mitochondrial intermembrane segment spans residues 1–14 (MAHPVQLSLQDATS). The chain crosses the membrane as a helical span at residues 15–45 (PIMEELITFHDHAFMAMSLISFLVLYALALT). Topologically, residues 46-59 (LTTKLTNTNITDAQ) are mitochondrial matrix. Residues 60 to 87 (EMETIWTILPAVILILIALPSLRVLYLT) form a helical membrane-spanning segment. Residues 88–227 (DEVNDPSLTI…IFEMGPVFTL (140 aa)) are Mitochondrial intermembrane-facing. Cu cation-binding residues include histidine 161, cysteine 196, glutamate 198, cysteine 200, histidine 204, and methionine 207. Glutamate 198 contributes to the Mg(2+) binding site.

It belongs to the cytochrome c oxidase subunit 2 family. Component of the cytochrome c oxidase (complex IV, CIV), a multisubunit enzyme composed of 14 subunits. The complex is composed of a catalytic core of 3 subunits MT-CO1, MT-CO2 and MT-CO3, encoded in the mitochondrial DNA, and 11 supernumerary subunits COX4I, COX5A, COX5B, COX6A, COX6B, COX6C, COX7A, COX7B, COX7C, COX8 and NDUFA4, which are encoded in the nuclear genome. The complex exists as a monomer or a dimer and forms supercomplexes (SCs) in the inner mitochondrial membrane with NADH-ubiquinone oxidoreductase (complex I, CI) and ubiquinol-cytochrome c oxidoreductase (cytochrome b-c1 complex, complex III, CIII), resulting in different assemblies (supercomplex SCI(1)III(2)IV(1) and megacomplex MCI(2)III(2)IV(2)). Found in a complex with TMEM177, COA6, COX18, COX20, SCO1 and SCO2. Interacts with TMEM177 in a COX20-dependent manner. Interacts with COX20. Interacts with COX16. It depends on Cu cation as a cofactor.

It localises to the mitochondrion inner membrane. The catalysed reaction is 4 Fe(II)-[cytochrome c] + O2 + 8 H(+)(in) = 4 Fe(III)-[cytochrome c] + 2 H2O + 4 H(+)(out). Component of the cytochrome c oxidase, the last enzyme in the mitochondrial electron transport chain which drives oxidative phosphorylation. The respiratory chain contains 3 multisubunit complexes succinate dehydrogenase (complex II, CII), ubiquinol-cytochrome c oxidoreductase (cytochrome b-c1 complex, complex III, CIII) and cytochrome c oxidase (complex IV, CIV), that cooperate to transfer electrons derived from NADH and succinate to molecular oxygen, creating an electrochemical gradient over the inner membrane that drives transmembrane transport and the ATP synthase. Cytochrome c oxidase is the component of the respiratory chain that catalyzes the reduction of oxygen to water. Electrons originating from reduced cytochrome c in the intermembrane space (IMS) are transferred via the dinuclear copper A center (CU(A)) of subunit 2 and heme A of subunit 1 to the active site in subunit 1, a binuclear center (BNC) formed by heme A3 and copper B (CU(B)). The BNC reduces molecular oxygen to 2 water molecules using 4 electrons from cytochrome c in the IMS and 4 protons from the mitochondrial matrix. The polypeptide is Cytochrome c oxidase subunit 2 (MT-CO2) (Macaca fascicularis (Crab-eating macaque)).